The sequence spans 140 residues: Small ribosomal subunit protein uS12 (140 aa).

Residues 1–28 form a disordered region; that stretch reads MPTINQLVRKSRKALEKKSTAPALQKGY. D102 carries the post-translational modification 3-methylthioaspartic acid. The segment at 119–140 is disordered; sequence GVDKRRQSRSKYGAKRPKEAKK. Residues 124–140 show a composition bias toward basic residues; sequence RQSRSKYGAKRPKEAKK.

This sequence belongs to the universal ribosomal protein uS12 family. In terms of assembly, part of the 30S ribosomal subunit. Contacts proteins S8 and S17. May interact with IF1 in the 30S initiation complex.

In terms of biological role, with S4 and S5 plays an important role in translational accuracy. Its function is as follows. Interacts with and stabilizes bases of the 16S rRNA that are involved in tRNA selection in the A site and with the mRNA backbone. Located at the interface of the 30S and 50S subunits, it traverses the body of the 30S subunit contacting proteins on the other side and probably holding the rRNA structure together. The combined cluster of proteins S8, S12 and S17 appears to hold together the shoulder and platform of the 30S subunit. This Clostridioides difficile (strain 630) (Peptoclostridium difficile) protein is Small ribosomal subunit protein uS12.